The primary structure comprises 82 residues: Small ribosomal subunit protein bS18 (82 aa).

Residues 1–20 (MSEINQTVTRRPFHRRRKTC) are disordered.

It belongs to the bacterial ribosomal protein bS18 family. Part of the 30S ribosomal subunit. Forms a tight heterodimer with protein bS6.

In terms of biological role, binds as a heterodimer with protein bS6 to the central domain of the 16S rRNA, where it helps stabilize the platform of the 30S subunit. This Bartonella quintana (strain Toulouse) (Rochalimaea quintana) protein is Small ribosomal subunit protein bS18.